The following is a 163-amino-acid chain: Anthranilate 1,2-dioxygenase small subunit (163 aa).

It belongs to the bacterial ring-hydroxylating dioxygenase beta subunit family. In terms of assembly, the anthranilate dioxygenase (AntDO) multicomponent enzyme system is composed of an oxygenase component and a NADH:acceptor reductase component (AntC). The oxygenase component is a heterohexamer of 3 large (AntA) and 3 small (AntB) subunits.

It catalyses the reaction anthranilate + NADH + O2 + 3 H(+) = catechol + NH4(+) + CO2 + NAD(+). It carries out the reaction anthranilate + NADPH + O2 + 3 H(+) = catechol + NH4(+) + CO2 + NADP(+). The protein operates within aromatic compound metabolism; anthranilate degradation via hydroxylation; catechol from anthranilate: step 1/1. Its function is as follows. Component of anthranilate dioxygenase multicomponent enzyme system which catalyzes the incorporation of both atoms of molecular oxygen into anthranilate to form catechol. In Acinetobacter baylyi (strain ATCC 33305 / BD413 / ADP1), this protein is Anthranilate 1,2-dioxygenase small subunit.